The following is an 87-amino-acid chain: Kappa-bungarotoxin (87 aa).

Residues 1–21 (MKTLLLTLVVVTIVCLDLGYT) form the signal peptide. 5 disulfides stabilise this stretch: C24/C42, C35/C63, C48/C52, C67/C79, and C80/C85.

The protein belongs to the three-finger toxin family. Long-chain subfamily. Kappa-neurotoxin sub-subfamily. In terms of assembly, homodimer and heterodimer; non-covalently linked. In terms of tissue distribution, expressed by the venom gland.

The protein resides in the secreted. Postsynaptic neurotoxin that binds and inhibits neuronal nicotinic acetylcholine receptors (nAChR) with high affinity (IC(50)&lt;100 nM). Is a selective, and slowly reversible antagonist of alpha-3/CHRNA3-containing and some alpha-4/CHRNA4-containing AChRs. In Bungarus multicinctus (Many-banded krait), this protein is Kappa-bungarotoxin.